Consider the following 356-residue polypeptide: MASLTDLVNLNLSDTTEKIIAEYIWIGGSGMDLRSKARTLSGPVTDPSKLPKWNYDGSSTGQAPGEDSEVILYPQAIFKDPFRKGNNILVMCDCYTPAGEPIPTNKRHNAAKIFSSPEVASEEPWYGIEQEYTLLQKDINWPLGWPVGGFPGPQGPYYCGIGADKSFGRDIVDSHYKACLYAGINISGINGEVMPGQWEFQVGPSVGISAGDQVWVARYILERITEIAGVVVSFDPKPIPGDWNGAGAHTNYSTKSMRNDGGYEIIKSAIEKLKLRHKEHISAYGEGNERRLTGRHETADINTFSWGVANRGASVRVGRETEQNGKGYFEDRRPASNMDPYIVTSMIAETTIIWKP.

One can recognise a GS beta-grasp domain in the interval 19-99 (IIAEYIWIGG…VMCDCYTPAG (81 aa)). Residues 106–356 (KRHNAAKIFS…IAETTIIWKP (251 aa)) form the GS catalytic domain.

Belongs to the glutamine synthetase family. In terms of assembly, homooctamer. As to expression, highly expressed in leaf blades, at intermediate levels in spikelets (rice flower) and at lower levels in roots.

Its subcellular location is the cytoplasm. The enzyme catalyses L-glutamate + NH4(+) + ATP = L-glutamine + ADP + phosphate + H(+). Functionally, high-affinity glutamine synthetase involved in ammonium assimilation. Seems to be a major component of the cytosolic glutamine synthetic pathway in leaf blades. Plays an important role in maintaining carbon and nitrogen metabolic balance during ammonium assimilation in shoots and roots, thus controlling plant growth and development. Plays an important role in maintaining broad range of metabolites and transcripts involved in the maintenance of plant metabolic homeostasis and development of plastid in roots. The protein is Glutamine synthetase cytosolic isozyme 1-1 of Oryza sativa subsp. japonica (Rice).